A 319-amino-acid polypeptide reads, in one-letter code: Epoxyqueuosine reductase (319 aa).

Asp-128 acts as the Proton donor in catalysis. One can recognise a 4Fe-4S ferredoxin-type domain in the interval 173-202; the sequence is EANDPHPNYCGTCTRCLSACPTAALVEPAV. Positions 182, 185, 188, 192, 208, 236, 239, and 243 each coordinate [4Fe-4S] cluster.

The protein belongs to the QueG family. As to quaternary structure, monomer. Requires cob(II)alamin as cofactor. The cofactor is [4Fe-4S] cluster.

It is found in the cytoplasm. The catalysed reaction is epoxyqueuosine(34) in tRNA + AH2 = queuosine(34) in tRNA + A + H2O. The protein operates within tRNA modification; tRNA-queuosine biosynthesis. Functionally, catalyzes the conversion of epoxyqueuosine (oQ) to queuosine (Q), which is a hypermodified base found in the wobble positions of tRNA(Asp), tRNA(Asn), tRNA(His) and tRNA(Tyr). The sequence is that of Epoxyqueuosine reductase from Gloeobacter violaceus (strain ATCC 29082 / PCC 7421).